The following is a 95-amino-acid chain: AFAGVLADADIKAALAGCAAAESFNYKTFFKACGLAGKFFAIIDQDHSGFIEEDELKLFLQTFSAGARALSDAETKDVDGDGMIGVDEFVALVKA.

The residue at position 1 (Ala1) is an N-acetylalanine. EF-hand domains lie at 39–66 (FFAI…FSAG) and 77–95 (DVDG…LVKA). Positions 44, 46, 48, 50, 52, 55, 77, 79, 81, 83, and 88 each coordinate Ca(2+).

It belongs to the parvalbumin family.

In muscle, parvalbumin is thought to be involved in relaxation after contraction. It binds two calcium ions. The protein is Parvalbumin beta 3 of Merluccius paradoxus (Deep-water Cape hake).